Here is a 108-residue protein sequence, read N- to C-terminus: UPF0145 protein SYNPCC7002_A1337 (108 aa).

The protein belongs to the UPF0145 family.

The polypeptide is UPF0145 protein SYNPCC7002_A1337 (Picosynechococcus sp. (strain ATCC 27264 / PCC 7002 / PR-6) (Agmenellum quadruplicatum)).